Reading from the N-terminus, the 69-residue chain is Protein translocase subunit SecE (69 aa).

The chain crosses the membrane as a helical span at residues 43 to 63; that stretch reads VAGAGILVIGFVGFLIYVLLT.

Belongs to the SecE/SEC61-gamma family. Component of the Sec protein translocase complex. Heterotrimer consisting of SecY (alpha), SecG (beta) and SecE (gamma) subunits. The heterotrimers can form oligomers, although 1 heterotrimer is thought to be able to translocate proteins. Interacts with the ribosome. May interact with SecDF, and other proteins may be involved.

The protein resides in the cell membrane. Functionally, essential subunit of the Sec protein translocation channel SecYEG. Clamps together the 2 halves of SecY. May contact the channel plug during translocation. In Methanococcoides burtonii (strain DSM 6242 / NBRC 107633 / OCM 468 / ACE-M), this protein is Protein translocase subunit SecE.